The chain runs to 199 residues: MSYELDPLPYEYDALEPHISEQVLTWHHDTHHQGYVNGWNAAEETLAENREAGEFGSSAGALRNVTHNGSGHILHDLFWQNMSPEGGDEPEGALAERIAEDFGSYEAWKGEFEAAAGAAGGWALLVYDSFSNQLRNVVVDKHDQGALWGSHPILALDVWEHSYYHDYGPARGDFVSAFFEVVDWDEPAARYEQAVELFE.

Mn(2+) contacts are provided by His-28, His-75, Asp-157, and His-161.

It belongs to the iron/manganese superoxide dismutase family. Mn(2+) serves as cofactor.

The catalysed reaction is 2 superoxide + 2 H(+) = H2O2 + O2. Its function is as follows. Destroys superoxide anion radicals which are normally produced within the cells and which are toxic to biological systems. This is Superoxide dismutase [Mn] 2 (sod2) from Haloferax volcanii (strain ATCC 29605 / DSM 3757 / JCM 8879 / NBRC 14742 / NCIMB 2012 / VKM B-1768 / DS2) (Halobacterium volcanii).